The sequence spans 114 residues: ATP synthase epsilon chain (114 aa).

Belongs to the ATPase epsilon chain family. In terms of assembly, F-type ATPases have 2 components, CF(1) - the catalytic core - and CF(0) - the membrane proton channel. CF(1) has five subunits: alpha(3), beta(3), gamma(1), delta(1), epsilon(1). CF(0) has three main subunits: a, b and c.

It localises to the cell membrane. In terms of biological role, produces ATP from ADP in the presence of a proton gradient across the membrane. The polypeptide is ATP synthase epsilon chain (Wolbachia pipientis wMel).